Consider the following 78-residue polypeptide: Large ribosomal subunit protein bL28 (78 aa).

Residues 1 to 25 (MSRVCQVTGKRPAVGNNRSHARNAT) are disordered.

Belongs to the bacterial ribosomal protein bL28 family.

The sequence is that of Large ribosomal subunit protein bL28 from Vibrio vulnificus (strain CMCP6).